The chain runs to 560 residues: Proline--tRNA ligase (560 aa).

This sequence belongs to the class-II aminoacyl-tRNA synthetase family. ProS type 1 subfamily. As to quaternary structure, homodimer.

Its subcellular location is the cytoplasm. It carries out the reaction tRNA(Pro) + L-proline + ATP = L-prolyl-tRNA(Pro) + AMP + diphosphate. Catalyzes the attachment of proline to tRNA(Pro) in a two-step reaction: proline is first activated by ATP to form Pro-AMP and then transferred to the acceptor end of tRNA(Pro). As ProRS can inadvertently accommodate and process non-cognate amino acids such as alanine and cysteine, to avoid such errors it has two additional distinct editing activities against alanine. One activity is designated as 'pretransfer' editing and involves the tRNA(Pro)-independent hydrolysis of activated Ala-AMP. The other activity is designated 'posttransfer' editing and involves deacylation of mischarged Ala-tRNA(Pro). The misacylated Cys-tRNA(Pro) is not edited by ProRS. This chain is Proline--tRNA ligase, found in Vesicomyosocius okutanii subsp. Calyptogena okutanii (strain HA).